Here is a 29-residue protein sequence, read N- to C-terminus: Toxin II.9 (29 aa).

The LCN-type CS-alpha/beta domain maps to 2 to 29; that stretch reads KDGYLVNKYTGCKVNCYKLGENKFCNRE.

The protein belongs to the long (4 C-C) scorpion toxin superfamily. Sodium channel inhibitor family. Beta subfamily. As to expression, expressed by the venom gland.

It is found in the secreted. Functionally, binds to sodium channels (Nav) and shift the voltage of activation toward more negative potentials. This toxin is active on crustaceans. This is Toxin II.9 from Centruroides limpidus (Mexican scorpion).